Reading from the N-terminus, the 462-residue chain is MSSVKRSLKQEIVTQFHCSAAEGDIAKLTGILSHSPSLLNETSENGWTALMYAARNGHPEIVQFLLEKGCDRSIVNKSRQTALDIAVFWGYKHIANLLATAKGGKKPWFLTNEVEECENYFSKTLLDRKSEKRNNSDWLLAKESHPATVFILFSDLNPLVTLGGNKESFQQPEVRLCQLNYTDIKDYLAQPEKITLIFLGVELEIKDKLLNYAGEVPREEEDGLVAWFALGIDPIAAEEFKQRHENCYFLHPPMPALLQLKEKEAGVVAQARSVLAWHSRYKFCPTCGNATKIEEGGYKRLCLKEDCPSLNGVHNTSYPRVDPVVIMQVIHPDGTKCLLGRQKRFPPGMFTCLAGFIEPGETIEDAVRREVEEESGVKVGHVQYVACQPWPMPSSLMIGCLALAVSTEIKVDKNEIEDARWFTREQVLDVLTKGKQQAFFVPPSRAIAHQLIKHWIRINPNL.

ANK repeat units follow at residues 11–40, 45–74, and 78–98; these read EIVT…SLLN, NGWT…DRSI, and SRQT…ANLL. The residue at position 185 (Lys185) is an N6-succinyllysine. Zn(2+) contacts are provided by Cys284 and Cys287. The residue at position 292 (Lys292) is an N6-succinyllysine. Residues Cys302 and Cys307 each contribute to the Zn(2+) site. Residues Tyr318, 354 to 356, Glu370, Glu374, and Glu415 contribute to the substrate site; that span reads AGF. Positions 319 to 453 constitute a Nudix hydrolase domain; the sequence is PRVDPVVIMQ…SRAIAHQLIK (135 aa). Mg(2+) is bound by residues Ala354, Glu370, Glu374, and Glu415. The Nudix box signature appears at 355-376; that stretch reads GFIEPGETIEDAVRREVEEESG. Positions 460-462 match the Microbody targeting signal motif; that stretch reads PNL.

The protein belongs to the Nudix hydrolase family. NudC subfamily. As to quaternary structure, homodimer. Homodimerization is essential for its catalytic activity and protein stability. Interacts (via ANK repeats) with BLMH. Mg(2+) serves as cofactor. Requires Zn(2+) as cofactor.

Its subcellular location is the cytoplasm. The protein localises to the peroxisome. The protein resides in the cytoplasmic granule. It carries out the reaction a 5'-end NAD(+)-phospho-ribonucleoside in mRNA + H2O = a 5'-end phospho-adenosine-phospho-ribonucleoside in mRNA + beta-nicotinamide D-ribonucleotide + 2 H(+). The enzyme catalyses NAD(+) + H2O = beta-nicotinamide D-ribonucleotide + AMP + 2 H(+). The catalysed reaction is NADH + H2O = reduced beta-nicotinamide D-ribonucleotide + AMP + 2 H(+). It catalyses the reaction NADPH + H2O = reduced beta-nicotinamide D-ribonucleotide + adenosine 2',5'-bisphosphate + 2 H(+). In terms of biological role, mRNA decapping enzyme that specifically removes the nicotinamide adenine dinucleotide (NAD) cap from a subset of mRNAs by hydrolyzing the diphosphate linkage to produce nicotinamide mononucleotide (NMN) and 5' monophosphate mRNA. The NAD-cap is present at the 5'-end of some RNAs; in contrast to the canonical N7 methylguanosine (m7G) cap, the NAD cap promotes mRNA decay. Preferentially acts on NAD-capped transcripts in response to nutrient stress. Also acts on free nicotinamide adenine dinucleotide molecules: hydrolyzes NAD(H) into NMN(H) and AMP, and NADPH into NMNH and 2',5'-ADP. May act to regulate the concentration of peroxisomal nicotinamide nucleotide cofactors required for oxidative metabolism in this organelle. Regulates the levels of circadian clock components PER1, PER2, PER3 and CRY2 in the liver. The sequence is that of NAD-capped RNA hydrolase NUDT12 from Homo sapiens (Human).